The chain runs to 254 residues: NFU1 iron-sulfur cluster scaffold homolog, mitochondrial (254 aa).

A mitochondrion-targeting transit peptide spans 1–9 (MAATARRGW). The nifU stretch occupies residues 173-241 (IKELLDTRIR…IPEVEGVEQV (69 aa)). Positions 210 and 213 each coordinate [4Fe-4S] cluster.

Belongs to the NifU family. Monomer and homohexamer; the apo-NFU1 is a monomer, while the holo-NFU1 is a hexamer composed of a trimer of dimer that is probably linked by some 4Fe-4S cluster. Interacts with HIRA and EPM2A/laforin. Interacts with BOLA3. Interacts with HSPA9. As to expression, ubiquitous. Expression in adult lung is weak compared to fetal lung.

It is found in the mitochondrion. It localises to the cytoplasm. The protein localises to the cytosol. Iron-sulfur cluster scaffold protein which can assemble [4Fe-4S] clusters and deliver them to target proteins. The sequence is that of NFU1 iron-sulfur cluster scaffold homolog, mitochondrial (NFU1) from Homo sapiens (Human).